The chain runs to 88 residues: Large ribosomal subunit protein bL27 (88 aa).

The disordered stretch occupies residues 1 to 25 (MAHKKGASSSRNGRDSNAQRLGVKR). Over residues 7–19 (ASSSRNGRDSNAQ) the composition is skewed to polar residues.

The protein belongs to the bacterial ribosomal protein bL27 family.

This chain is Large ribosomal subunit protein bL27, found in Nocardia farcinica (strain IFM 10152).